A 237-amino-acid polypeptide reads, in one-letter code: (5-formylfuran-3-yl)methyl phosphate synthase (237 aa).

The Schiff-base intermediate with substrate role is filled by Lys27. Lys85 functions as the Proton acceptor in the catalytic mechanism.

The protein belongs to the MfnB family.

It carries out the reaction 2 D-glyceraldehyde 3-phosphate = 4-(hydroxymethyl)-2-furancarboxaldehyde phosphate + phosphate + 2 H2O. The protein operates within cofactor biosynthesis; methanofuran biosynthesis. In terms of biological role, catalyzes the formation of 4-(hydroxymethyl)-2-furancarboxaldehyde phosphate (4-HFC-P) from two molecules of glyceraldehyde-3-P (GA-3-P). This is (5-formylfuran-3-yl)methyl phosphate synthase from Methanobrevibacter smithii (strain ATCC 35061 / DSM 861 / OCM 144 / PS).